A 529-amino-acid polypeptide reads, in one-letter code: Cytochrome P450 monooxygenase acuD (529 aa).

The chain crosses the membrane as a helical span at residues 8–28 (FAVIAASAAAVAGVLFLIYAA). Asn-81 is a glycosylation site (N-linked (GlcNAc...) asparagine). Residue Cys-449 coordinates heme.

It belongs to the cytochrome P450 family. Requires heme as cofactor.

It localises to the endoplasmic reticulum membrane. The enzyme catalyses 3-hydroxybenzyl alcohol + reduced [NADPH--hemoprotein reductase] + O2 = gentisyl alcohol + oxidized [NADPH--hemoprotein reductase] + H2O + H(+). It functions in the pathway secondary metabolite biosynthesis. In terms of biological role, cytochrome P450 monooxygenase; part of the gene cluster that mediates the biosynthesis of aculins. The pathway begins with the synthesis of 6-methylsalicylic acid by the polyketide synthase (PKS) acuA via condensation of acetate and malonate units. The 6-methylsalicylic acid decarboxylase acuB then catalyzes the decarboxylation of 6-methylsalicylic acid to yield m-cresol (also known as 3-methylphenol). These first reactions occur in the cytosol. The intermediate m-cresol is then transported into the endoplasmic reticulum where the cytochrome P450 monooxygenase acuC converts it to m-hydroxybenzyl alcohol, which is further converted to gentisyl alcohol by the cytochrome P450 monooxygenase acuD. Gentisyl alcohol is further oxidized by the oxidoreductase acuE that probably catalyzes hydroxylation of the aromatic ring. The aromatic system might then be opened by oxidation through a Baeyer-Villiger type of oxidation, which could be catalyzed by acuF, with the carboxylic acid at C-1 subsequently reduced to an aldehyde by acuG. Subsequently, a hemiacetal is formed, before the dehydrogenase acuH would reduce the double bond between C-4 and C-6. Finally, keto-enol tautomerism results in formation of aculinic acid, which exists as two diastereomers (both R/S configurations at C-1) by non-enzymatic hemiacetal formation. The carboxypeptidase acuI could be involved in the linking of aculinic acid to an aculene A moiety produced by the aculene biosynthesis cluster and which leads to the production of aculin A. AcuI may also be involved in the attachment of proline to aculinic acid to form epi-aculins A and B. The sequence is that of Cytochrome P450 monooxygenase acuD from Aspergillus aculeatus (strain ATCC 16872 / CBS 172.66 / WB 5094).